The sequence spans 250 residues: Cyclin-Q (250 aa).

N-acetylmethionine is present on M1. A compositionally biased stretch (basic and acidic residues) spans 1–10; sequence MEAVRPDSCE. Residues 1 to 22 are disordered; that stretch reads MEAVRPDSCERGTAAARAEERP.

The protein belongs to the cyclin family. Cyclin-like FAM58 subfamily. As to quaternary structure, associates with CDK10 to promote its kinase activity.

In terms of biological role, activating cyclin for the cyclin-associated kinase CDK10. This Rattus norvegicus (Rat) protein is Cyclin-Q (Ccnq).